The following is a 487-amino-acid chain: GTPase Der (487 aa).

Positions 1–20 are disordered; sequence MAKAVRKSNSEETVPIKAPR. 2 consecutive EngA-type G domains span residues 28 to 197 and 225 to 401; these read PVVS…SSKP and FRLA…SRSR. GTP contacts are provided by residues 34–41, 83–87, 149–152, 231–238, 278–282, and 343–346; these read GRQNVGKS, DTPGL, NKAD, GKPNSGKS, DTAGI, and NKWD. The KH-like domain occupies 402 to 486; it reads RKVSTSELNK…PVRLEFRSDR (85 aa).

Belongs to the TRAFAC class TrmE-Era-EngA-EngB-Septin-like GTPase superfamily. EngA (Der) GTPase family. Associates with the 50S ribosomal subunit.

GTPase that plays an essential role in the late steps of ribosome biogenesis. This chain is GTPase Der, found in Leptospira borgpetersenii serovar Hardjo-bovis (strain L550).